The chain runs to 354 residues: Guanine nucleotide-binding protein G(t) subunit alpha-3 (354 aa).

A disordered region spans residues 1–27 (MGSGISSESKESAKRSKELEKKLQEDA). G2 is lipidated: N-myristoyl glycine. The span at 8–27 (ESKESAKRSKELEKKLQEDA) shows a compositional bias: basic and acidic residues. Residues 32 to 354 (RTVKLLLLGA…KENLKDCGLF (323 aa)) enclose the G-alpha domain. A G1 motif region spans residues 35-48 (KLLLLGAGESGKST). GTP contacts are provided by residues 40-47 (GAGESGKS), 175-181 (LHSRVKT), 200-204 (DVGGQ), 269-272 (NKKD), and A326. Mg(2+)-binding residues include S47 and T181. The interval 173–181 (DVLHSRVKT) is G2 motif. The G3 motif stretch occupies residues 196–205 (FRMFDVGGQR). The tract at residues 265 to 272 (VLFLNKKD) is G4 motif. Residues 324-329 (TCATDT) form a G5 motif region.

The protein belongs to the G-alpha family. G(i/o/t/z) subfamily. G proteins are composed of 3 units; alpha, beta and gamma, respectively GNAT3, GNB1 and GNG13 for Gustducin heterotrimer for bitter taste transduction. The alpha chain contains the guanine nucleotide binding site. Component of the TAS2R14-GNAT3 complex, consisting of TAS2R14, GNAT3, GNB1 and GNG2; within the complex interacts with TAS2R14; this complex plays a role in the perception of bitterness. Gustducin heterotrimer may also be composed of GNAT3, GNB3 and GNG13. In terms of processing, potential N-myristoylation may anchor alpha-subunit to the inner surface of plasma membrane. Expressed in taste buds (sensory organs of clustered epithelial cells) of the circumvallate and foliate papillae of the tongue at protein level. Expressed in enteroendocrine L cells of the gut. Detected also in spermatozoa.

The protein localises to the cytoplasm. In terms of biological role, guanine nucleotide-binding protein (G protein) alpha subunit playing a prominent role in bitter and sweet taste transduction as well as in umami (monosodium glutamate, monopotassium glutamate, and inosine monophosphate) taste transduction. Transduction by this alpha subunit involves coupling of specific cell-surface receptors with a cGMP-phosphodiesterase; Activation of phosphodiesterase lowers intracellular levels of cAMP and cGMP which may open a cyclic nucleotide-suppressible cation channel leading to influx of calcium, ultimately leading to release of neurotransmitter. Indeed, denatonium and strychnine induce transient reduction in cAMP and cGMP in taste tissue, whereas this decrease is inhibited by GNAT3 antibody. Gustducin heterotrimer transduces response to bitter and sweet compounds via regulation of phosphodiesterase for alpha subunit, as well as via activation of phospholipase C for beta and gamma subunits, with ultimate increase inositol trisphosphate and increase of intracellular Calcium. GNAT3 can functionally couple to taste receptors to transmit intracellular signal: receptor heterodimer TAS1R2/TAS1R3 senses sweetness and TAS1R1/TAS1R3 transduces umami taste, whereas the T2R family GPCRs such as TAS2R14 act as bitter sensors. Also functions as lumenal sugar sensors in the gut to control the expression of the Na+-glucose transporter SGLT1 in response to dietaty sugar, as well as the secretion of Glucagon-like peptide-1, GLP-1 and glucose-dependent insulinotropic polypeptide, GIP. Thus, may modulate the gut capacity to absorb sugars, with implications in malabsorption syndromes and diet-related disorders including diabetes and obesity. This Homo sapiens (Human) protein is Guanine nucleotide-binding protein G(t) subunit alpha-3 (GNAT3).